A 1108-amino-acid chain; its full sequence is Valine--tRNA ligase, mitochondrial 1 (1108 aa).

Residues 1 to 46 (MSLLFLRRAKPLFVSCCSATHSRSSFLSPTLTNQLVRSFHGSRTMS) constitute a mitochondrion transit peptide. Residues 57–93 (ELERKKKKEEKAKEKELKKQKALEKERLAELKAKQAK) are compositionally biased toward basic and acidic residues. Positions 57-138 (ELERKKKKEE…RKRLSSQMAK (82 aa)) are disordered. Positions 177 to 187 (PNVTGALHIGH) match the 'HIGH' region motif. Residues 695–699 (KMSKS) carry the 'KMSKS' region motif. Lysine 698 is an ATP binding site. Residues 1032–1064 (AINTEAEQEKIRNKIGELQKQKEKLQKMMSVST) adopt a coiled-coil conformation.

Belongs to the class-I aminoacyl-tRNA synthetase family.

The protein localises to the mitochondrion. It localises to the cytoplasm. The protein resides in the cytosol. The enzyme catalyses tRNA(Val) + L-valine + ATP = L-valyl-tRNA(Val) + AMP + diphosphate. In terms of biological role, required for embryo development and seed viability. The chain is Valine--tRNA ligase, mitochondrial 1 from Arabidopsis thaliana (Mouse-ear cress).